Reading from the N-terminus, the 475-residue chain is uncharacterized protein (475 aa).

Residues 19-39 traverse the membrane as a helical segment; sequence LVSAILILSILIWLIITIFFA.

The protein localises to the membrane. This is an uncharacterized protein from Mycoplasma pneumoniae (strain ATCC 29342 / M129 / Subtype 1) (Mycoplasmoides pneumoniae).